The sequence spans 296 residues: Protoheme IX farnesyltransferase (296 aa).

Transmembrane regions (helical) follow at residues 8–28 (VTKP…FLLA), 35–55 (YPLF…GCVF), 84–104 (VSLV…YIGA), 107–127 (LAMW…SLYM), 132–152 (VYGT…GYCA), 162–182 (LILL…IAIF), 208–228 (ITVY…GGYA), 229–249 (GYKY…MALR), and 263–283 (LFVF…IDFS).

It belongs to the UbiA prenyltransferase family. Protoheme IX farnesyltransferase subfamily.

It is found in the cell inner membrane. It catalyses the reaction heme b + (2E,6E)-farnesyl diphosphate + H2O = Fe(II)-heme o + diphosphate. It participates in porphyrin-containing compound metabolism; heme O biosynthesis; heme O from protoheme: step 1/1. In terms of biological role, converts heme B (protoheme IX) to heme O by substitution of the vinyl group on carbon 2 of heme B porphyrin ring with a hydroxyethyl farnesyl side group. The protein is Protoheme IX farnesyltransferase of Serratia proteamaculans (strain 568).